We begin with the raw amino-acid sequence, 234 residues long: Exotoxin type G (234 aa).

The signal sequence occupies residues 1–24 (MKTNILTIIILSCVFSYGSQLAYA).

This sequence belongs to the staphylococcal/streptococcal toxin family.

Mitogenic for human peripheral blood lymphocytes. In Streptococcus pyogenes serotype M3 (strain ATCC BAA-595 / MGAS315), this protein is Exotoxin type G (speG).